The following is a 66-amino-acid chain: Alpha-conotoxin Vc1a (66 aa).

The first 25 residues, 1-25, serve as a signal peptide directing secretion; that stretch reads MGMRMMFTVFLLVVLATTVVSSTSG. Residues 26–47 constitute a propeptide that is removed on maturation; it reads RREFRGRNAAAKASDLVSLTDK. Cystine bridges form between Cys-51-Cys-57 and Cys-52-Cys-65. Positions 53–55 are ser-Xaa-Pro motif, crucial for potent interaction with nAChR; the sequence is SDP. Key region for inhibition of alpha-9-alpha-10/CHRNA9-CHRNA10 nAChR stretches follow at residues 54-56 and 60-64; these read DPR and DHPEI. Pro-55 is subject to 4-hydroxyproline. Glu-63 is subject to 4-carboxyglutamate. Cys-65 carries the post-translational modification Cysteine amide.

The protein belongs to the conotoxin A superfamily. Post-translationally, vc1.1 is described as having no post-translational modifications (except C-terminal amidation), whereas Vc1a contains a hydroxyproline at Pro-55 and a 4-carboxyglutamate at Glu-63 (and a C-terminal amidation). In terms of processing, hydroxylation of Pro-55 is not important for inhibition of alpha-9-alpha-10/CHRNA9-CHRNA10 nAChRs, since [P6O]Vc1.1 (Pro-55 hydroxylated) shows similar inhibition than native toxin (IC(50)=99.1 nM). In contrast, hydroxylation of Pro-55 seems to impair inhibition of HVA calcium channel currents, since [P6O]Vc1.1 has no effect on HVA calcium channel currents. In vivo, hydroxylation of Pro-55 seems to induce the loss of analgesic effects in rat models of neuropathic pain, since [P6O]Vc1.1 has no effect on mechanical allodynia. Gamma-carboxylation of Glu-63 is not important for inhibition of alpha-9-alpha-10/CHRNA9-CHRNA10 nAChRs, since [E14gamma]Vc1.1 (carboxyglutamate at Glu-63) shows similar inhibition than native toxin (IC(50)=65.3 nM). In contrast, gamma-carboxylation of Glu-63 seems to impair inhibition of HVA calcium channel currents, since [E14gamma]Vc1.1 has no effect on HVA calcium channel currents. Post-translationally, non-native isomers 'ribbon' (with disulfide connectivity C1-C4; C2-C3) and 'beads' (with disulfide connectivity C1-C2; C3-C4) of Vc1.1 also inhibit HVA calcium channel currents in rat DRG neurons (20-30% inhibition at 1 uM toxin). It has been shown that both reduced and alkylated Vc1.1 have no effect on HVA calcium channel currents. The observed activity can be attributed to specific isomers. In terms of processing, [C3S]Vc1.1(1-8) mutant is C-terminally amidated. In terms of tissue distribution, expressed by the venom duct.

It is found in the secreted. Functionally, alpha-conotoxins act on postsynaptic membranes, they bind to the nicotinic acetylcholine receptors (nAChR) and thus inhibit them. This toxin (native toxin Vc1a; hydroxylated and gamma-carboxylated) blocks alpha-9-alpha-10/CHRNA9-CHRNA10 nAChRs (IC(50)=62.9 nM). In contrast to the non-post-translationally modified analog Vc1.1, Vc1a does not inhibit high voltage-activated (HVA) calcium channel currents. In vivo, in contrast to Vc1.1, Vc1a does not show analgesic effects in rat models of neuropathic pain. In terms of biological role, the synthetic peptide Vc1.1 (a non-hydroxylated and non-gamma-carboxylated analog of Vc1a) has two types of targets. It blocks alpha-9-alpha-10/CHRNA9-CHRNA10 nAChRs (on rat receptors, IC(50)=19-109 nM) (with preference for rat over human receptors) and inhibits high voltage-activated (HVA) calcium channel (Cav2.2, Cav2.3) currents by acting on GABA(B) receptors (GABBR1 and GABBR2) (IC(50)=1.7 nM). It also shows moderate inhibition on alpha-6/alpha-3-beta-2-beta-3 (CHRNA6/CHRNA3-CHRNB2-CHRNB3) (IC(50)=140 nM) and alpha-6/alpha-3-beta-4 (CHRNA6/CHRNA3-CHRNB4) (IC(50)=980 nM). On alpha-9-alpha-10/CHRNA9-CHRNA10 nAChR, it most likely interacts with the alpha-10(+)/alpha-9(-)interface of the receptor. In vivo, it acts as a powerful analgesic in rat models of neuropathic pain. This Conus victoriae (Queen Victoria cone) protein is Alpha-conotoxin Vc1a.